Here is a 45-residue protein sequence, read N- to C-terminus: Globin, minor monomeric component (45 aa).

The Globin domain occupies 1-45 (GLSAAERQVVASCWKDIAGADXGAGVGKEXLIKFISAAPEMAAVF).

This sequence belongs to the globin family. In terms of assembly, monomer.

The sequence is that of Globin, minor monomeric component from Glycera dibranchiata (Bloodworm).